Reading from the N-terminus, the 179-residue chain is MSSRILTSDVIGIDALLHDHHAVLAKSTGGAVAVFANNAPAFYAVTPARMAELLALEEKLSRPGSDVALDAQFYEEPEAAPVAIPCGKFAMYPAWQPDADFQRQAALWGVALREPVTAEELAAFIAYWQAEGKVFHHIQWQQKLARSVQISRSSNGGMPQRDINSVSEPDNHIPPGFRG.

The segment covering 151 to 168 (SRSSNGGMPQRDINSVSE) has biased composition (polar residues). Residues 151 to 179 (SRSSNGGMPQRDINSVSEPDNHIPPGFRG) are disordered.

This sequence belongs to the DnaT family. As to quaternary structure, homooligomerizes. Interacts with PriB. Component of the replication restart primosome. Primosome assembly occurs via a 'hand-off' mechanism. PriA binds to replication forks, subsequently PriB then DnaT bind; DnaT then displaces ssDNA to generate the helicase loading substrate.

Involved in the restart of stalled replication forks, which reloads the replicative helicase on sites other than the origin of replication. Can function in multiple replication restart pathways. Displaces ssDNA from a PriB-ssDNA complex. Probably forms a spiral filament on ssDNA. This is Replication restart protein DnaT from Salmonella schwarzengrund (strain CVM19633).